Here is a 274-residue protein sequence, read N- to C-terminus: Nitrogenase iron protein (274 aa).

Gly8 to Ser15 contributes to the ATP binding site. Cys94 provides a ligand contact to [4Fe-4S] cluster. ADP-ribosylarginine; by dinitrogenase reductase ADP-ribosyltransferase is present on Arg97. Cys131 is a [4Fe-4S] cluster binding site.

The protein belongs to the NifH/BchL/ChlL family. Homodimer. The cofactor is [4Fe-4S] cluster. The reversible ADP-ribosylation of Arg-97 inactivates the nitrogenase reductase and regulates nitrogenase activity.

It catalyses the reaction N2 + 8 reduced [2Fe-2S]-[ferredoxin] + 16 ATP + 16 H2O = H2 + 8 oxidized [2Fe-2S]-[ferredoxin] + 2 NH4(+) + 16 ADP + 16 phosphate + 6 H(+). Its function is as follows. The key enzymatic reactions in nitrogen fixation are catalyzed by the nitrogenase complex, which has 2 components: the iron protein and the molybdenum-iron protein. The chain is Nitrogenase iron protein from Dehalococcoides mccartyi (strain ATCC BAA-2266 / KCTC 15142 / 195) (Dehalococcoides ethenogenes (strain 195)).